The sequence spans 1396 residues: DNA-directed RNA polymerase subunit beta' (1396 aa).

Zn(2+) is bound by residues Cys72, Cys74, Cys87, and Cys90. Asp463, Asp465, and Asp467 together coordinate Mg(2+). Zn(2+) is bound by residues Cys814, Cys889, Cys896, and Cys899.

It belongs to the RNA polymerase beta' chain family. In terms of assembly, the RNAP catalytic core consists of 2 alpha, 1 beta, 1 beta' and 1 omega subunit. When a sigma factor is associated with the core the holoenzyme is formed, which can initiate transcription. Mg(2+) is required as a cofactor. Requires Zn(2+) as cofactor.

The enzyme catalyses RNA(n) + a ribonucleoside 5'-triphosphate = RNA(n+1) + diphosphate. In terms of biological role, DNA-dependent RNA polymerase catalyzes the transcription of DNA into RNA using the four ribonucleoside triphosphates as substrates. The protein is DNA-directed RNA polymerase subunit beta' of Chlamydia muridarum (strain MoPn / Nigg).